Consider the following 53-residue polypeptide: Metallothionein (53 aa).

Positions 1–6 (MRVIRM) are excised as a propeptide. 9 residues coordinate Cu(+): Cys-17, His-19, Cys-22, Cys-24, Cys-32, His-33, Cys-34, Cys-43, and Cys-45.

The protein belongs to the metallothionein superfamily.

Its function is as follows. Metallothioneins are small proteins that have a high content of cysteine residues which allow them to bind heavy metal ions through clusters of thiolate bonds. MymT binds up to seven ions of Cu(+), with a preference for four to six Cu(+) ions, in a solvent-shielded core. MymT protects M.tuberculosis from copper toxicity. This Mycobacterium tuberculosis (strain CDC 1551 / Oshkosh) protein is Metallothionein (mymT).